The sequence spans 415 residues: Carboxypeptidase G2 (415 aa).

The N-terminal stretch at M1 to T22 is a signal peptide. Position 112 (H112) interacts with Zn(2+). D114 is an active-site residue. D141 serves as a coordination point for Zn(2+). The active-site Proton acceptor is E175. Zn(2+) contacts are provided by E176, E200, and H385.

The protein belongs to the peptidase M20A family. In terms of assembly, homodimer. It depends on Zn(2+) as a cofactor.

The catalysed reaction is Release of C-terminal glutamate residues from a wide range of N-acylating moieties, including peptidyl, aminoacyl, benzoyl, benzyloxycarbonyl, folyl and pteroyl groups.. Functionally, catalyzes the hydrolysis of reduced and non-reduced folates to pteroates and L-glutamate. This enzyme has a broad specificity. This Pseudomonas sp. (strain RS-16) protein is Carboxypeptidase G2 (cpg2).